A 283-amino-acid chain; its full sequence is Pre-mRNA-splicing factor CWC23 (283 aa).

Residues 15–87 (NLYDVLELPT…DVRPHYDRWL (73 aa)) form the J domain.

This sequence belongs to the DnaJ family. As to quaternary structure, belongs to the CWC complex (or CEF1-associated complex), a spliceosome sub-complex reminiscent of a late-stage spliceosome composed of the U2, U5 and U6 snRNAs and at least BUD13, BUD31, BRR2, CDC40, CEF1, CLF1, CUS1, CWC2, CWC15, CWC21, CWC22, CWC23, CWC24, CWC25, CWC27, ECM2, HSH155, IST3, ISY1, LEA1, MSL1, NTC20, PRP8, PRP9, PRP11, PRP19, PRP21, PRP22, PRP45, PRP46, SLU7, SMB1, SMD1, SMD2, SMD3, SMX2, SMX3, SNT309, SNU114, SPP2, SYF1, SYF2, RSE1 and YJU2.

It localises to the cytoplasm. It is found in the nucleus. Its function is as follows. Involved in pre-mRNA splicing. May be involved in endoplasmic reticulum-associated protein degradation (ERAD) and required for growth at low and high temperatures. This Saccharomyces cerevisiae (strain ATCC 204508 / S288c) (Baker's yeast) protein is Pre-mRNA-splicing factor CWC23 (CWC23).